We begin with the raw amino-acid sequence, 297 residues long: Lipoyl synthase (297 aa).

[4Fe-4S] cluster contacts are provided by Cys37, Cys42, Cys48, Cys63, Cys67, Cys70, and Ser276. The 217-residue stretch at 49–265 (WSRKHATVMI…ERIAKTKGFL (217 aa)) folds into the Radical SAM core domain.

The protein belongs to the radical SAM superfamily. Lipoyl synthase family. It depends on [4Fe-4S] cluster as a cofactor.

The protein localises to the cytoplasm. The catalysed reaction is [[Fe-S] cluster scaffold protein carrying a second [4Fe-4S](2+) cluster] + N(6)-octanoyl-L-lysyl-[protein] + 2 oxidized [2Fe-2S]-[ferredoxin] + 2 S-adenosyl-L-methionine + 4 H(+) = [[Fe-S] cluster scaffold protein] + N(6)-[(R)-dihydrolipoyl]-L-lysyl-[protein] + 4 Fe(3+) + 2 hydrogen sulfide + 2 5'-deoxyadenosine + 2 L-methionine + 2 reduced [2Fe-2S]-[ferredoxin]. It participates in protein modification; protein lipoylation via endogenous pathway; protein N(6)-(lipoyl)lysine from octanoyl-[acyl-carrier-protein]: step 2/2. Functionally, catalyzes the radical-mediated insertion of two sulfur atoms into the C-6 and C-8 positions of the octanoyl moiety bound to the lipoyl domains of lipoate-dependent enzymes, thereby converting the octanoylated domains into lipoylated derivatives. In Rickettsia prowazekii (strain Madrid E), this protein is Lipoyl synthase.